The chain runs to 100 residues: Aspartyl/glutamyl-tRNA(Asn/Gln) amidotransferase subunit C (100 aa).

This sequence belongs to the GatC family. Heterotrimer of A, B and C subunits.

The enzyme catalyses L-glutamyl-tRNA(Gln) + L-glutamine + ATP + H2O = L-glutaminyl-tRNA(Gln) + L-glutamate + ADP + phosphate + H(+). The catalysed reaction is L-aspartyl-tRNA(Asn) + L-glutamine + ATP + H2O = L-asparaginyl-tRNA(Asn) + L-glutamate + ADP + phosphate + 2 H(+). Its function is as follows. Allows the formation of correctly charged Asn-tRNA(Asn) or Gln-tRNA(Gln) through the transamidation of misacylated Asp-tRNA(Asn) or Glu-tRNA(Gln) in organisms which lack either or both of asparaginyl-tRNA or glutaminyl-tRNA synthetases. The reaction takes place in the presence of glutamine and ATP through an activated phospho-Asp-tRNA(Asn) or phospho-Glu-tRNA(Gln). This chain is Aspartyl/glutamyl-tRNA(Asn/Gln) amidotransferase subunit C, found in Streptococcus uberis (strain ATCC BAA-854 / 0140J).